A 150-amino-acid chain; its full sequence is Macrodomain Ter protein (150 aa).

This sequence belongs to the MatP family. Homodimer.

It localises to the cytoplasm. In terms of biological role, required for spatial organization of the terminus region of the chromosome (Ter macrodomain) during the cell cycle. Prevents early segregation of duplicated Ter macrodomains during cell division. Binds specifically to matS, which is a 13 bp signature motif repeated within the Ter macrodomain. In Escherichia coli (strain SMS-3-5 / SECEC), this protein is Macrodomain Ter protein.